We begin with the raw amino-acid sequence, 328 residues long: DNA-directed RNA polymerase subunit alpha (328 aa).

Residues 1–234 form an alpha N-terminal domain (alpha-NTD) region; the sequence is MQNSTTEFLK…DQMSIFADLQ (234 aa). Positions 248–328 are alpha C-terminal domain (alpha-CTD); the sequence is IDPVLLRPVD…AWPPVGLEKP (81 aa).

The protein belongs to the RNA polymerase alpha chain family. Homodimer. The RNAP catalytic core consists of 2 alpha, 1 beta, 1 beta' and 1 omega subunit. When a sigma factor is associated with the core the holoenzyme is formed, which can initiate transcription.

The catalysed reaction is RNA(n) + a ribonucleoside 5'-triphosphate = RNA(n+1) + diphosphate. DNA-dependent RNA polymerase catalyzes the transcription of DNA into RNA using the four ribonucleoside triphosphates as substrates. This chain is DNA-directed RNA polymerase subunit alpha, found in Neisseria meningitidis serogroup A / serotype 4A (strain DSM 15465 / Z2491).